The chain runs to 93 residues: Pyrimidine/purine nucleoside phosphorylase (93 aa).

This sequence belongs to the nucleoside phosphorylase PpnP family.

The enzyme catalyses a purine D-ribonucleoside + phosphate = a purine nucleobase + alpha-D-ribose 1-phosphate. The catalysed reaction is adenosine + phosphate = alpha-D-ribose 1-phosphate + adenine. It catalyses the reaction cytidine + phosphate = cytosine + alpha-D-ribose 1-phosphate. It carries out the reaction guanosine + phosphate = alpha-D-ribose 1-phosphate + guanine. The enzyme catalyses inosine + phosphate = alpha-D-ribose 1-phosphate + hypoxanthine. The catalysed reaction is thymidine + phosphate = 2-deoxy-alpha-D-ribose 1-phosphate + thymine. It catalyses the reaction uridine + phosphate = alpha-D-ribose 1-phosphate + uracil. It carries out the reaction xanthosine + phosphate = alpha-D-ribose 1-phosphate + xanthine. Functionally, catalyzes the phosphorolysis of diverse nucleosides, yielding D-ribose 1-phosphate and the respective free bases. Can use uridine, adenosine, guanosine, cytidine, thymidine, inosine and xanthosine as substrates. Also catalyzes the reverse reactions. In Magnetococcus marinus (strain ATCC BAA-1437 / JCM 17883 / MC-1), this protein is Pyrimidine/purine nucleoside phosphorylase.